A 307-amino-acid chain; its full sequence is Putative gluconeogenesis factor (307 aa).

It belongs to the gluconeogenesis factor family.

It localises to the cytoplasm. Required for morphogenesis under gluconeogenic growth conditions. This chain is Putative gluconeogenesis factor, found in Yersinia pestis.